The chain runs to 106 residues: Immunoglobulin lambda constant 7 (106 aa).

The 95-residue stretch at 7-101 folds into the Ig-like domain; it reads PSVTLFPPSS…EGSTVEKTVA (95 aa). A disulfide bridge connects residues C28 and C87.

Immunoglobulins are composed of two identical heavy chains and two identical light chains; disulfide-linked.

The protein resides in the secreted. The protein localises to the cell membrane. Its function is as follows. Constant region of immunoglobulin light chains. Immunoglobulins, also known as antibodies, are membrane-bound or secreted glycoproteins produced by B lymphocytes. In the recognition phase of humoral immunity, the membrane-bound immunoglobulins serve as receptors which, upon binding of a specific antigen, trigger the clonal expansion and differentiation of B lymphocytes into immunoglobulins-secreting plasma cells. Secreted immunoglobulins mediate the effector phase of humoral immunity, which results in the elimination of bound antigens. The antigen binding site is formed by the variable domain of one heavy chain, together with that of its associated light chain. Thus, each immunoglobulin has two antigen binding sites with remarkable affinity for a particular antigen. The variable domains are assembled by a process called V-(D)-J rearrangement and can then be subjected to somatic hypermutations which, after exposure to antigen and selection, allow affinity maturation for a particular antigen. This chain is Immunoglobulin lambda constant 7, found in Homo sapiens (Human).